A 70-amino-acid polypeptide reads, in one-letter code: Putative membrane protein insertion efficiency factor (70 aa).

It belongs to the UPF0161 family.

It localises to the cell membrane. Its function is as follows. Could be involved in insertion of integral membrane proteins into the membrane. The polypeptide is Putative membrane protein insertion efficiency factor (Symbiobacterium thermophilum (strain DSM 24528 / JCM 14929 / IAM 14863 / T)).